Consider the following 1333-residue polypeptide: Partitioning defective 3 homolog (1333 aa).

Ser25 is modified (phosphoserine). Phosphothreonine is present on Thr91. A disordered region spans residues Ser143–Asn262. 2 stretches are compositionally biased toward polar residues: residues Gly150–Glu163 and Thr171–Ser187. Phosphoserine is present on residues Ser156 and Ser174. Residues Thr190–Pro203 show a composition bias toward basic and acidic residues. Residues Ser207–Ala224 show a composition bias toward polar residues. Residues Met271–Pro359 form the PDZ 1 domain. 2 disordered regions span residues Leu369–Cys388 and Asn397–Ser441. Ser383 bears the Phosphoserine mark. 2 PDZ domains span residues Asn461–Arg546 and Glu590–Gln677. Tyr489 is modified (phosphotyrosine). Residues Ser692, Ser695, Ser715, Ser728, Ser806, and Ser824 each carry the phosphoserine modification. Interaction with PRKCI and PRKCZ stretches follow at residues Arg712 to Pro932 and Arg712 to Asp936. At Lys831 the chain carries N6-acetyllysine. Ser834 bears the Phosphoserine mark. An N6-acetyllysine modification is found at Lys848. Residues Ser849 and Ser869 each carry the phosphoserine modification. Disordered regions lie at residues Thr861 to Ser884, Ser928 to Gly1011, Lys1024 to Ala1071, Pro1110 to His1267, and Gln1283 to Ser1333. N6-acetyllysine is present on Lys881. The segment at Lys931–Ser1333 is interaction with FRMD4A. Residues Asp935 to Glu949 are compositionally biased toward acidic residues. Ser958 carries the post-translational modification Phosphoserine; by AURKA. 2 positions are modified to phosphoserine: Ser967 and Ser969. Basic and acidic residues-rich tracts occupy residues Asp977–Lys1005 and Arg1026–Ile1039. Ser1042 carries the phosphoserine modification. Positions Glu1046 to Ala1071 are enriched in basic and acidic residues. Residues Glu1046–Glu1078 adopt a coiled-coil conformation. Residues Pro1134–Ser1143 are compositionally biased toward polar residues. The segment covering Asn1144 to Tyr1171 has biased composition (basic and acidic residues). Coiled coils occupy residues His1145–Arg1168, Val1195–Leu1218, and Met1274–Gln1295. Positions Ser1176–Arg1199 are enriched in low complexity. A compositionally biased stretch (polar residues) spans Tyr1215–Gln1236. Over residues Gln1283–Leu1292 the composition is skewed to basic and acidic residues. Polar residues predominate over residues Ser1314–Gln1323. Over residues Thr1324–Ser1333 the composition is skewed to basic and acidic residues. Lys1327 is modified (N6-acetyllysine).

This sequence belongs to the PAR3 family. As to quaternary structure, interacts with PRCKI and CDH5. Interacts (via PDZ 3 domain) with PTEN (via C-terminus). Component of a complex whose core is composed of ARHGAP17, AMOT, PALS1, PATJ and PARD3/PAR3. Interacts with LIMK2, AURKA and AURKB. Component of the Par polarity complex, composed of at least phosphorylated PRKCZ, PARD3 and TIAM1. Interacts with ECT2 and FBF1. Interacts (via PDZ 1 domain) with F11R/JAM1, PARD6A and PARD6B. Part of a complex with PARD6A or PARD6B, PRKCI or PRKCZ and CDC42 or RAC1. Directly interacts with TIAM1 and TIAM2. Interacts with SIRT2. Interacts (via coiled-coil domain) with FRMD4A. Found in a complex with PARD3, CYTH1 and FRMD4A. Interacts with SAPCD2. Interacts with PRKCA. Interacts with PRKCZ. In terms of processing, acetylated. Deacetylated by SIRT2, thereby inhibiting Schwann cell peripheral myelination. Phosphorylation at Ser-824 by PRKCZ and PRKCI occurs at the most apical tip of epithelial cell-cell contacts during the initial phase of tight junction formation and may promote dissociation of the complex with PARD6. EGF-induced Tyr-1123 phosphorylation mediates dissociation from LIMK2. Phosphorylation by AURKA at Ser-958 is required for the normal establishment of neuronal polarity. Isoform 4 and isoform 5 are phosphorylated during oocyte maturation. In terms of tissue distribution, all isoforms are expressed in heart, while expression in brain is mainly limited to isoform 1, and to isoform 3 to a weaker level.

The protein localises to the cytoplasm. The protein resides in the endomembrane system. It is found in the cell junction. Its subcellular location is the tight junction. It localises to the adherens junction. The protein localises to the cell cortex. The protein resides in the cytoskeleton. It is found in the cell membrane. Functionally, adapter protein involved in asymmetrical cell division and cell polarization processes. Seems to play a central role in the formation of epithelial tight junctions. Targets the phosphatase PTEN to cell junctions. Association with PARD6B may prevent the interaction of PARD3 with F11R/JAM1, thereby preventing tight junction assembly. The PARD6-PARD3 complex links GTP-bound Rho small GTPases to atypical protein kinase C proteins. Required for establishment of neuronal polarity and normal axon formation in cultured hippocampal neurons. Involved in Schwann cell peripheral myelination. In Mus musculus (Mouse), this protein is Partitioning defective 3 homolog (Pard3).